The sequence spans 349 residues: MTGKKVCIVGSGNWGSAIAKIVGGNAAQLAHFDPRVTMWVFEEDIGGRKLTEIINTQHENVKYLPGHKLPPNVVAVPDVVQAAADADILIFVVPHQFIGKICDQLKGHLKADTIGVSLIKGVDEGPKGLKLISEVIGERLGIPMSVLMGANIANEVADEKFCETTIGSKNQAHGQLLKELMQTPNFRITVVQEVDTVEICGALKNIVAVGAGFCDGLGFGDNTKAAVIRLGLMEMIAFAKLFCSGSVSSATFLESCGVADLITTCYGGRNRKVAEAFARTGKSIEQLEKEMLNGQKLQGPQTARELHSILQHKGMVDKFPLFTAVYKVCYENQPVGEFIHCLQNHPEHV.

10 to 15 (GSGNWG) is an NAD(+) binding site. Lysine 120 contributes to the substrate binding site. Alanine 153 lines the NAD(+) pocket. Lysine 204 acts as the Proton acceptor in catalysis. Arginine 269 contacts NAD(+). A substrate-binding site is contributed by 269–270 (RN). Lysine 289 carries the post-translational modification N6-succinyllysine. Lysine 296 and glutamine 298 together coordinate NAD(+). Tyrosine 326 is modified (phosphotyrosine).

The protein belongs to the NAD-dependent glycerol-3-phosphate dehydrogenase family. Homodimer.

It localises to the cytoplasm. It catalyses the reaction sn-glycerol 3-phosphate + NAD(+) = dihydroxyacetone phosphate + NADH + H(+). Functionally, has glycerol-3-phosphate dehydrogenase activity. This Bos taurus (Bovine) protein is Glycerol-3-phosphate dehydrogenase [NAD(+)], cytoplasmic (GPD1).